Consider the following 512-residue polypeptide: Maturase K (512 aa).

It belongs to the intron maturase 2 family. MatK subfamily.

The protein localises to the plastid. Its subcellular location is the chloroplast. Usually encoded in the trnK tRNA gene intron. Probably assists in splicing its own and other chloroplast group II introns. The sequence is that of Maturase K from Lemna minor (Common duckweed).